We begin with the raw amino-acid sequence, 692 residues long: Centrosomal protein of 83 kDa (692 aa).

Coiled coils occupy residues 32-625 and 656-689; these read RCEH…SLIL and HLQE…ELGS. Serine 689 is subject to Phosphoserine.

Belongs to the CEP83 family. In terms of assembly, interacts with CEP164 and IFT20.

It localises to the cytoplasm. The protein resides in the cytoskeleton. Its subcellular location is the microtubule organizing center. It is found in the centrosome. The protein localises to the centriole. In terms of biological role, component of the distal appendage region of the centriole involved in the initiation of primary cilium assembly. May collaborate with IFT20 in the trafficking of ciliary membrane proteins from the Golgi complex to the cilium during the initiation of primary cilium assembly. This chain is Centrosomal protein of 83 kDa (Cep83), found in Mus musculus (Mouse).